Reading from the N-terminus, the 208-residue chain is FMN-dependent NADH:quinone oxidoreductase 1 (208 aa).

It belongs to the azoreductase type 1 family. Homodimer. The cofactor is FMN.

It carries out the reaction 2 a quinone + NADH + H(+) = 2 a 1,4-benzosemiquinone + NAD(+). The enzyme catalyses N,N-dimethyl-1,4-phenylenediamine + anthranilate + 2 NAD(+) = 2-(4-dimethylaminophenyl)diazenylbenzoate + 2 NADH + 2 H(+). Quinone reductase that provides resistance to thiol-specific stress caused by electrophilic quinones. Functionally, also exhibits azoreductase activity. Catalyzes the reductive cleavage of the azo bond in aromatic azo compounds to the corresponding amines. The chain is FMN-dependent NADH:quinone oxidoreductase 1 from Bacillus cereus (strain ATCC 14579 / DSM 31 / CCUG 7414 / JCM 2152 / NBRC 15305 / NCIMB 9373 / NCTC 2599 / NRRL B-3711).